The following is a 33-amino-acid chain: Large ribosomal subunit protein uL24 (33 aa).

Belongs to the universal ribosomal protein uL24 family. In terms of assembly, component of the large ribosomal subunit.

The protein localises to the cytoplasm. Component of the large ribosomal subunit. The ribosome is a large ribonucleoprotein complex responsible for the synthesis of proteins in the cell. In Xenopus laevis (African clawed frog), this protein is Large ribosomal subunit protein uL24 (rpl26).